The chain runs to 198 residues: Ribonuclease HII (198 aa).

One can recognise an RNase H type-2 domain in the interval 10-198 (HLVAGVDEVG…PVKRALGLVS (189 aa)). Positions 16, 17, and 108 each coordinate a divalent metal cation.

The protein belongs to the RNase HII family. It depends on Mn(2+) as a cofactor. The cofactor is Mg(2+).

It is found in the cytoplasm. The enzyme catalyses Endonucleolytic cleavage to 5'-phosphomonoester.. In terms of biological role, endonuclease that specifically degrades the RNA of RNA-DNA hybrids. The chain is Ribonuclease HII from Salmonella schwarzengrund (strain CVM19633).